Reading from the N-terminus, the 290-residue chain is MKYTSAILISAFAATNVFAHGVVTEVQGANGVTLPGLTAIDGTPRDCPNPGCGSEADTAIIRDRELGTSRASALGRTQGGGPVDAAKMIELFMDGASVNKSDVVAARERHAANLARRATLLPRAGGGTSTPKGTEETGVKAATGIAATKGLPTTNDDGTINIVFHQVNQDGAGPLTADIDSTSGGQDVSAFQKAKITTNVPGLGIAGLSAAQTMDFPVAVQMPAGATCSGSVGGANNVCIARLRNAAVTGPFGGSVAFTQSPAARKRAIEYNLAKRRFARSLATDEEDDE.

The N-terminal stretch at 1–19 is a signal peptide; it reads MKYTSAILISAFAATNVFA. The N-linked (GlcNAc...) asparagine glycan is linked to Asn99. A disordered region spans residues 121–140; that stretch reads LPRAGGGTSTPKGTEETGVK.

It is found in the cytoplasm. Its function is as follows. Appressoria-specific virulence factor required for appressorial penetration in host and lesion development. In Pyricularia oryzae (strain 70-15 / ATCC MYA-4617 / FGSC 8958) (Rice blast fungus), this protein is Appressoria-specific virulence factor GAS2.